The primary structure comprises 367 residues: Probable protein phosphatase 2C 57 (367 aa).

The segment at 1 to 29 is disordered; sequence MEEHRLGGGGGGGGGGGRPPIPGAAGRKL. The span at 7-18 shows a compositional bias: gly residues; the sequence is GGGGGGGGGGGR. A PPM-type phosphatase domain is found at 67 to 331; the sequence is RSGGWADIGS…DNLSVVVICF (265 aa). Asp-111, Gly-112, Asp-279, and Asp-322 together coordinate Mn(2+).

This sequence belongs to the PP2C family. Mg(2+) serves as cofactor. It depends on Mn(2+) as a cofactor.

It catalyses the reaction O-phospho-L-seryl-[protein] + H2O = L-seryl-[protein] + phosphate. The enzyme catalyses O-phospho-L-threonyl-[protein] + H2O = L-threonyl-[protein] + phosphate. The protein is Probable protein phosphatase 2C 57 of Oryza sativa subsp. japonica (Rice).